Reading from the N-terminus, the 313-residue chain is D-alanine--D-alanine ligase (313 aa).

The ATP-grasp domain maps to 108-308 (KLVWQQTGVP…YSELVVKVLS (201 aa)). 138–193 (VAKLGLPLFVKPASEGSSVAVLKVKTADALPAALEEAATHDKIVIVEKSIEGGGEY) is an ATP binding site. Residues D262, E275, and N277 each coordinate Mg(2+).

Belongs to the D-alanine--D-alanine ligase family. It depends on Mg(2+) as a cofactor. Mn(2+) is required as a cofactor.

It is found in the cytoplasm. It catalyses the reaction 2 D-alanine + ATP = D-alanyl-D-alanine + ADP + phosphate + H(+). The protein operates within cell wall biogenesis; peptidoglycan biosynthesis. Functionally, cell wall formation. This chain is D-alanine--D-alanine ligase, found in Burkholderia cenocepacia (strain ATCC BAA-245 / DSM 16553 / LMG 16656 / NCTC 13227 / J2315 / CF5610) (Burkholderia cepacia (strain J2315)).